The primary structure comprises 391 residues: NADH-quinone oxidoreductase subunit D (391 aa).

The protein belongs to the complex I 49 kDa subunit family. As to quaternary structure, NDH-1 is composed of 14 different subunits. Subunits NuoB, C, D, E, F, and G constitute the peripheral sector of the complex.

It is found in the cell inner membrane. The enzyme catalyses a quinone + NADH + 5 H(+)(in) = a quinol + NAD(+) + 4 H(+)(out). NDH-1 shuttles electrons from NADH, via FMN and iron-sulfur (Fe-S) centers, to quinones in the respiratory chain. The immediate electron acceptor for the enzyme in this species is believed to be ubiquinone. Couples the redox reaction to proton translocation (for every two electrons transferred, four hydrogen ions are translocated across the cytoplasmic membrane), and thus conserves the redox energy in a proton gradient. The chain is NADH-quinone oxidoreductase subunit D from Rickettsia massiliae (strain Mtu5).